The sequence spans 162 residues: NADH-quinone oxidoreductase subunit I (162 aa).

2 consecutive 4Fe-4S ferredoxin-type domains span residues 54–83 (RRYE…IESE) and 93–122 (TRYD…ETQI). 8 residues coordinate [4Fe-4S] cluster: Cys-63, Cys-66, Cys-69, Cys-73, Cys-102, Cys-105, Cys-108, and Cys-112.

Belongs to the complex I 23 kDa subunit family. As to quaternary structure, NDH-1 is composed of 14 different subunits. Subunits NuoA, H, J, K, L, M, N constitute the membrane sector of the complex. The cofactor is [4Fe-4S] cluster.

The protein localises to the cell inner membrane. The catalysed reaction is a quinone + NADH + 5 H(+)(in) = a quinol + NAD(+) + 4 H(+)(out). Functionally, NDH-1 shuttles electrons from NADH, via FMN and iron-sulfur (Fe-S) centers, to quinones in the respiratory chain. The immediate electron acceptor for the enzyme in this species is believed to be ubiquinone. Couples the redox reaction to proton translocation (for every two electrons transferred, four hydrogen ions are translocated across the cytoplasmic membrane), and thus conserves the redox energy in a proton gradient. This is NADH-quinone oxidoreductase subunit I from Burkholderia thailandensis (strain ATCC 700388 / DSM 13276 / CCUG 48851 / CIP 106301 / E264).